The sequence spans 251 residues: Dehydration-responsive element-binding protein 1I (251 aa).

The segment at M1–T50 is disordered. The AP2/ERF DNA-binding region spans V54–A114. The interval A169–F198 is disordered.

This sequence belongs to the AP2/ERF transcription factor family. ERF subfamily.

It is found in the nucleus. Its function is as follows. Transcriptional activator that binds specifically to the DNA sequence 5'-[AG]CCGAC-3'. Binding to the C-repeat/DRE element mediates high salinity- and dehydration-inducible transcription. This chain is Dehydration-responsive element-binding protein 1I (DREB1I), found in Oryza sativa subsp. japonica (Rice).